Here is a 487-residue protein sequence, read N- to C-terminus: (S)-N-methylcoclaurine 3'-hydroxylase isozyme 1 (487 aa).

The chain crosses the membrane as a helical span at residues 4–24 (TVALIAVIISSILYLLFGGSG). Residue Cys-429 participates in heme binding.

The protein belongs to the cytochrome P450 family. Requires heme as cofactor.

The protein localises to the endoplasmic reticulum membrane. The protein resides in the microsome membrane. The catalysed reaction is (S)-N-methylcoclaurine + reduced [NADPH--hemoprotein reductase] + O2 = (S)-3'-hydroxy-N-methylcoclaurine + oxidized [NADPH--hemoprotein reductase] + H2O + H(+). It participates in alkaloid biosynthesis; (S)-reticuline biosynthesis; (S)-reticuline from (S)-norcoclaurine: step 3/4. In terms of biological role, 3'-hydroxylation of (S)-N-methylcoclaurine. The protein is (S)-N-methylcoclaurine 3'-hydroxylase isozyme 1 (CYP80B1) of Eschscholzia californica (California poppy).